The chain runs to 539 residues: 2-isopropylmalate synthase (539 aa).

The Pyruvate carboxyltransferase domain occupies 8 to 269 (VLIFDTTLRD…YFNPFFGRPP (262 aa)). Mn(2+)-binding residues include Asp-17, His-208, His-210, and Asn-244. The regulatory domain stretch occupies residues 408-539 (QLKLVQVSCG…DLAKVEKKGI (132 aa)).

It belongs to the alpha-IPM synthase/homocitrate synthase family. LeuA type 1 subfamily. As to quaternary structure, homodimer. The cofactor is Mn(2+).

It is found in the cytoplasm. The enzyme catalyses 3-methyl-2-oxobutanoate + acetyl-CoA + H2O = (2S)-2-isopropylmalate + CoA + H(+). It functions in the pathway amino-acid biosynthesis; L-leucine biosynthesis; L-leucine from 3-methyl-2-oxobutanoate: step 1/4. In terms of biological role, catalyzes the condensation of the acetyl group of acetyl-CoA with 3-methyl-2-oxobutanoate (2-ketoisovalerate) to form 3-carboxy-3-hydroxy-4-methylpentanoate (2-isopropylmalate). The chain is 2-isopropylmalate synthase from Prochlorococcus marinus (strain NATL2A).